A 321-amino-acid polypeptide reads, in one-letter code: Malate dehydrogenase (321 aa).

Residues 11–16 (GSGNIG) and Asp35 contribute to the NAD(+) site. Substrate is bound by residues Arg84 and Arg90. NAD(+) is bound by residues Asn97 and 120 to 122 (ITN). Substrate is bound by residues Asn122 and Arg153. His177 functions as the Proton acceptor in the catalytic mechanism.

Belongs to the LDH/MDH superfamily. MDH type 3 family.

The catalysed reaction is (S)-malate + NAD(+) = oxaloacetate + NADH + H(+). Functionally, catalyzes the reversible oxidation of malate to oxaloacetate. In Rickettsia peacockii (strain Rustic), this protein is Malate dehydrogenase.